A 67-amino-acid polypeptide reads, in one-letter code: Large ribosomal subunit protein uL29 (67 aa).

It belongs to the universal ribosomal protein uL29 family.

This Cereibacter sphaeroides (strain ATCC 17025 / ATH 2.4.3) (Rhodobacter sphaeroides) protein is Large ribosomal subunit protein uL29.